The sequence spans 279 residues: Small ribosomal subunit protein uS2 (279 aa).

Composition is skewed to acidic residues over residues 1-18 (MTEN…DEAV), 28-42 (TATE…DESN), and 65-81 (ADAE…FDED). A disordered region spans residues 1–81 (MTENDNEVVE…ELEGPTFDED (81 aa)).

The protein belongs to the universal ribosomal protein uS2 family.

The polypeptide is Small ribosomal subunit protein uS2 (Haloquadratum walsbyi (strain DSM 16790 / HBSQ001)).